Reading from the N-terminus, the 67-residue chain is Small ribosomal subunit protein eS31 (67 aa).

Residues cysteine 31, cysteine 34, cysteine 49, and cysteine 52 each coordinate Zn(2+). The C4-type zinc finger occupies 31–52 (CPKCGAGVFMAEHLNRFACGKC).

Belongs to the eukaryotic ribosomal protein eS31 family. As to quaternary structure, part of the 30S ribosomal subunit. Zn(2+) serves as cofactor.

This is Small ribosomal subunit protein eS31 from Methanococcus maripaludis (strain C5 / ATCC BAA-1333).